A 99-amino-acid polypeptide reads, in one-letter code: Ferredoxin (99 aa).

One can recognise a 2Fe-2S ferredoxin-type domain in the interval 4 to 96 (YKIHLLCEEE…DCTISTHVEQ (93 aa)). Residues Cys42, Cys47, Cys50, and Cys80 each contribute to the [2Fe-2S] cluster site.

This sequence belongs to the 2Fe2S plant-type ferredoxin family. In terms of assembly, forms a complex with heterodimeric ferredoxin-thioredoxin reductase (FTR) and thioredoxin. [2Fe-2S] cluster serves as cofactor.

The protein resides in the plastid. It is found in the chloroplast. In terms of biological role, ferredoxins are iron-sulfur proteins that transfer electrons in a wide variety of metabolic reactions. The protein is Ferredoxin (petF) of Pyropia yezoensis (Susabi-nori).